The chain runs to 277 residues: Putative hydroxypyruvate isomerase (277 aa).

Catalysis depends on proton donor/acceptor residues Glu150 and Glu249.

This sequence belongs to the hyi family.

It catalyses the reaction 3-hydroxypyruvate = 2-hydroxy-3-oxopropanoate. Functionally, catalyzes the reversible isomerization between hydroxypyruvate and 2-hydroxy-3-oxopropanoate (also termed tartronate semialdehyde). The chain is Putative hydroxypyruvate isomerase (Hyi) from Mus musculus (Mouse).